The primary structure comprises 228 residues: Small ribosomal subunit protein uS10m (228 aa).

A mitochondrion-targeting transit peptide spans 1–17 (MKRYMFGTLPRVQPKRC).

This sequence belongs to the universal ribosomal protein uS10 family. As to quaternary structure, component of the mitochondrial small ribosomal subunit (mt-SSU). Mature yeast 74S mitochondrial ribosomes consist of a small (37S) and a large (54S) subunit. The 37S small subunit contains a 15S ribosomal RNA (15S mt-rRNA) and at least 32 different proteins. The 54S large subunit contains a 21S rRNA (21S mt-rRNA) and at least 45 different proteins.

The protein resides in the mitochondrion. Component of the mitochondrial ribosome (mitoribosome), a dedicated translation machinery responsible for the synthesis of mitochondrial genome-encoded proteins, including at least some of the essential transmembrane subunits of the mitochondrial respiratory chain. The mitoribosomes are attached to the mitochondrial inner membrane and translation products are cotranslationally integrated into the membrane. This Schizosaccharomyces pombe (strain 972 / ATCC 24843) (Fission yeast) protein is Small ribosomal subunit protein uS10m (rsm10).